Consider the following 165-residue polypeptide: Putative BTB/POZ domain-containing protein At2g40440 (165 aa).

Residues 24–98 enclose the BTB domain; sequence VDVRLKAGDS…IYSDGSMLSA (75 aa).

Its pathway is protein modification; protein ubiquitination. May act as a substrate-specific adapter of an E3 ubiquitin-protein ligase complex (CUL3-RBX1-BTB) which mediates the ubiquitination and subsequent proteasomal degradation of target proteins. The protein is Putative BTB/POZ domain-containing protein At2g40440 of Arabidopsis thaliana (Mouse-ear cress).